The chain runs to 262 residues: Hydroxyethylthiazole kinase (262 aa).

Substrate is bound at residue Met-39. 2 residues coordinate ATP: Lys-115 and Thr-160. Gly-187 provides a ligand contact to substrate.

Belongs to the Thz kinase family. Requires Mg(2+) as cofactor.

It carries out the reaction 5-(2-hydroxyethyl)-4-methylthiazole + ATP = 4-methyl-5-(2-phosphooxyethyl)-thiazole + ADP + H(+). It functions in the pathway cofactor biosynthesis; thiamine diphosphate biosynthesis; 4-methyl-5-(2-phosphoethyl)-thiazole from 5-(2-hydroxyethyl)-4-methylthiazole: step 1/1. Functionally, catalyzes the phosphorylation of the hydroxyl group of 4-methyl-5-beta-hydroxyethylthiazole (THZ). This Staphylococcus epidermidis (strain ATCC 12228 / FDA PCI 1200) protein is Hydroxyethylthiazole kinase.